The chain runs to 450 residues: Asparagine--tRNA ligase (450 aa).

This sequence belongs to the class-II aminoacyl-tRNA synthetase family. As to quaternary structure, homodimer.

Its subcellular location is the cytoplasm. The enzyme catalyses tRNA(Asn) + L-asparagine + ATP = L-asparaginyl-tRNA(Asn) + AMP + diphosphate + H(+). This chain is Asparagine--tRNA ligase, found in Metamycoplasma arthritidis (strain 158L3-1) (Mycoplasma arthritidis).